The sequence spans 100 residues: Small ribosomal subunit protein uS14c (100 aa).

This sequence belongs to the universal ribosomal protein uS14 family. As to quaternary structure, component of the chloroplast small ribosomal subunit (SSU). Mature 70S chloroplast ribosomes of higher plants consist of a small (30S) and a large (50S) subunit. The 30S small subunit contains 1 molecule of ribosomal RNA (16S rRNA) and 24 different proteins. The 50S large subunit contains 3 rRNA molecules (23S, 5S and 4.5S rRNA) and 33 different proteins.

The protein resides in the plastid. It localises to the chloroplast. Component of the chloroplast ribosome (chloro-ribosome), a dedicated translation machinery responsible for the synthesis of chloroplast genome-encoded proteins, including proteins of the transcription and translation machinery and components of the photosynthetic apparatus. The chain is Small ribosomal subunit protein uS14c from Spinacia oleracea (Spinach).